The primary structure comprises 780 residues: Cation channel sperm-associated protein 1 (780 aa).

Disordered regions lie at residues 1 to 37 (MDQN…PGHS), 71 to 306 (LSSH…QDHH), and 376 to 412 (QMSK…LQRT). Residues 1 to 447 (MDQNSVPEKA…EMIRNLTQSL (447 aa)) are Cytoplasmic-facing. Residues 110-122 (SYGEDYHDELQRD) show a composition bias toward basic and acidic residues. Residues 211 to 241 (QVPHRGWPHHHQVHHHGRSRHHEAHQHGKSP) show a composition bias toward basic residues. Over residues 261-284 (SDYHSEYHQGDHHPSEYHHGDHPH) the composition is skewed to basic and acidic residues. Residues 285-299 (HTQHHYHQTHRHRDY) are compositionally biased toward basic residues. Basic and acidic residues predominate over residues 387 to 401 (STKHSEDWGKEEGQF). Over residues 402-412 (QKRKTGRLQRT) the composition is skewed to basic residues. Residues 448–469 (AFETFIFFVVCLNTVMLVAQTF) traverse the membrane as a helical segment. Over 470–478 (AEVEIRGEW) the chain is Extracellular. Residues 479-500 (YFMALDSIFFCIYVVEALLKII) form a helical membrane-spanning segment. Over 501–508 (ALGLSYFF) the chain is Cytoplasmic. The chain crosses the membrane as a helical span at residues 509–531 (DFWNNLDFFIMAMAVLDFLLMQT). At 532–540 (HSFAIYHQS) the chain is on the extracellular side. A helical transmembrane segment spans residues 541-563 (LFRILKVFKSLRALRAIRVLRRL). Residues 564–581 (SFLTSVQEVTGTLGQSLP) are Cytoplasmic-facing. The helical transmembrane segment at 582–604 (SIAAILILMFTCLFLFSAVLRAL) threads the bilayer. Residues 605-615 (FRKSDPKRFQN) are Extracellular-facing. Residues 616-628 (IFTTIFTLFTLLT) constitute an intramembrane region (helical; Pore-forming). Residues 629–645 (LDDWSLIYMDSRAQGAW) lie on the Extracellular side of the membrane. A helical transmembrane segment spans residues 646-671 (YIIPILVIYIIIQYFIFLNLVITVLV). Over 672–780 (DSFQTALFKG…FEAGEEDFRN (109 aa)) the chain is Cytoplasmic.

This sequence belongs to the cation channel sperm-associated (TC 1.A.1.19) family. Component of the CatSper complex or CatSpermasome composed of the core pore-forming members CATSPER1, CATSPER2, CATSPER3 and CATSPER4 as well as auxiliary members CATSPERB, CATSPERG, CATSPERD, CATSPERE, CATSPERZ, C2CD6/CATSPERT, TMEM249, TMEM262 and EFCAB9. HSPA1 may be an additional auxiliary complex member. The core complex members CATSPER1, CATSPER2, CATSPER3 and CATSPER4 form a heterotetrameric channel. The auxiliary CATSPERB, CATSPERG, CATSPERD and CATSPERE subunits form a pavilion-like structure over the pore which stabilizes the complex through interactions with CATSPER4, CATSPER3, CATSPER1 and CATSPER2 respectively. TMEM262/CATSPERH interacts with CATSPERB, further stabilizing the complex. C2CD6/CATSPERT interacts at least with CATSPERD and is required for targeting the CatSper complex in the flagellar membrane. Interacts with Ca(v)3.3/CACNA1I, leading to suppression of T-type calcium channel activity. In terms of tissue distribution, testis-specific.

It is found in the cell projection. Its subcellular location is the cilium. It localises to the flagellum membrane. The enzyme catalyses Ca(2+)(in) = Ca(2+)(out). With respect to regulation, the CatSper calcium channel is indirectly activated by extracellular progesterone and prostaglandins following the sequence: progesterone &gt; PGF1-alpha = PGE1 &gt; PGA1 &gt; PGE2 &gt;&gt; PGD2. The CatSper calcium channel is directly inhibited by endocannabinoid 2-arachidonoylglycerol (2AG). Indirect activation by progesterone takes place via the following mechanism: progesterone binds and activates the acylglycerol lipase ABHD2, which in turn mediates hydrolysis of 2AG inhibitor, relieving inhibition of the CatSper channel. The primary effect of progesterone activation is to shift voltage dependence towards more physiological, negative membrane potentials; it is not mediated by metabotropic receptors and second messengers. Sperm capacitation enhances the effect of progesterone by providing additional negative shift. Also activated by the elevation of intracellular pH. Pore-forming subunit of the CatSper complex, a sperm-specific voltage-gated calcium channel that plays a central role in calcium-dependent physiological responses essential for successful fertilization, such as sperm hyperactivation, acrosome reaction and chemotaxis towards the oocyte. In Homo sapiens (Human), this protein is Cation channel sperm-associated protein 1 (CATSPER1).